The following is a 284-amino-acid chain: 2-dehydro-3-deoxyphosphooctonate aldolase (284 aa).

Belongs to the KdsA family.

It localises to the cytoplasm. The catalysed reaction is D-arabinose 5-phosphate + phosphoenolpyruvate + H2O = 3-deoxy-alpha-D-manno-2-octulosonate-8-phosphate + phosphate. It participates in carbohydrate biosynthesis; 3-deoxy-D-manno-octulosonate biosynthesis; 3-deoxy-D-manno-octulosonate from D-ribulose 5-phosphate: step 2/3. It functions in the pathway bacterial outer membrane biogenesis; lipopolysaccharide biosynthesis. In Erwinia tasmaniensis (strain DSM 17950 / CFBP 7177 / CIP 109463 / NCPPB 4357 / Et1/99), this protein is 2-dehydro-3-deoxyphosphooctonate aldolase.